Here is a 264-residue protein sequence, read N- to C-terminus: [LysW]-aminoadipate/[LysW]-glutamate kinase (264 aa).

Substrate contacts are provided by residues 35–36 (GG), R62, and N167.

Belongs to the acetylglutamate kinase family. LysZ subfamily.

The protein resides in the cytoplasm. The catalysed reaction is [amino-group carrier protein]-C-terminal-N-(1,4-dicarboxybutan-1-yl)-L-glutamine + ATP = [amino-group carrier protein]-C-terminal-N-(1-carboxy-5-phosphooxy-5-oxopentan-1-yl)-L-glutamine + ADP. It catalyses the reaction [amino-group carrier protein]-C-terminal-gamma-(L-glutamyl)-L-glutamate + ATP = [amino-group carrier protein]-C-terminal-gamma-(5-phospho-L-glutamyl)-L-glutamate + ADP. It participates in amino-acid biosynthesis; L-lysine biosynthesis via AAA pathway; L-lysine from L-alpha-aminoadipate (Thermus route): step 2/5. Its pathway is amino-acid biosynthesis; L-arginine biosynthesis. Functionally, involved in both the arginine and lysine biosynthetic pathways. Phosphorylates the LysW-bound precursors glutamate (for arginine biosynthesis), respectively alpha-aminoadipate (for lysine biosynthesis). In Saccharolobus islandicus (strain Y.N.15.51 / Yellowstone #2) (Sulfolobus islandicus), this protein is [LysW]-aminoadipate/[LysW]-glutamate kinase.